A 190-amino-acid polypeptide reads, in one-letter code: Holliday junction branch migration complex subunit RuvA (190 aa).

Residues 1-64 (MIGKLTGTLL…EDAQLLYGFG (64 aa)) form a domain I region. Positions 65–137 (TAQERQAFRE…LKGKLGADVG (73 aa)) are domain II. Residues 137 to 141 (GVRAH) are flexible linker. The domain III stretch occupies residues 142 to 190 (AANDNQADILQALLALGYNDKEAAAALKALPADVGVSEGIKLALKSLSK).

Belongs to the RuvA family. As to quaternary structure, homotetramer. Forms an RuvA(8)-RuvB(12)-Holliday junction (HJ) complex. HJ DNA is sandwiched between 2 RuvA tetramers; dsDNA enters through RuvA and exits via RuvB. An RuvB hexamer assembles on each DNA strand where it exits the tetramer. Each RuvB hexamer is contacted by two RuvA subunits (via domain III) on 2 adjacent RuvB subunits; this complex drives branch migration. In the full resolvosome a probable DNA-RuvA(4)-RuvB(12)-RuvC(2) complex forms which resolves the HJ.

The protein localises to the cytoplasm. In terms of biological role, the RuvA-RuvB-RuvC complex processes Holliday junction (HJ) DNA during genetic recombination and DNA repair, while the RuvA-RuvB complex plays an important role in the rescue of blocked DNA replication forks via replication fork reversal (RFR). RuvA specifically binds to HJ cruciform DNA, conferring on it an open structure. The RuvB hexamer acts as an ATP-dependent pump, pulling dsDNA into and through the RuvAB complex. HJ branch migration allows RuvC to scan DNA until it finds its consensus sequence, where it cleaves and resolves the cruciform DNA. The chain is Holliday junction branch migration complex subunit RuvA from Acidovorax sp. (strain JS42).